The primary structure comprises 376 residues: Succinyl-diaminopimelate desuccinylase (376 aa).

His67 contacts Zn(2+). The active site involves Asp69. Asp100 lines the Zn(2+) pocket. Glu134 functions as the Proton acceptor in the catalytic mechanism. Zn(2+) contacts are provided by Glu135, Glu163, and His349.

It belongs to the peptidase M20A family. DapE subfamily. In terms of assembly, homodimer. Zn(2+) is required as a cofactor. The cofactor is Co(2+).

It carries out the reaction N-succinyl-(2S,6S)-2,6-diaminopimelate + H2O = (2S,6S)-2,6-diaminopimelate + succinate. It functions in the pathway amino-acid biosynthesis; L-lysine biosynthesis via DAP pathway; LL-2,6-diaminopimelate from (S)-tetrahydrodipicolinate (succinylase route): step 3/3. Catalyzes the hydrolysis of N-succinyl-L,L-diaminopimelic acid (SDAP), forming succinate and LL-2,6-diaminopimelate (DAP), an intermediate involved in the bacterial biosynthesis of lysine and meso-diaminopimelic acid, an essential component of bacterial cell walls. The polypeptide is Succinyl-diaminopimelate desuccinylase (Shewanella woodyi (strain ATCC 51908 / MS32)).